The following is a 377-amino-acid chain: Chorismate synthase (377 aa).

NADP(+)-binding residues include Arg48 and Arg54. FMN-binding positions include 125–127 (RSS), 238–239 (NA), Gly278, 293–297 (KPTSS), and Arg319.

This sequence belongs to the chorismate synthase family. Homotetramer. It depends on FMNH2 as a cofactor.

It carries out the reaction 5-O-(1-carboxyvinyl)-3-phosphoshikimate = chorismate + phosphate. Its pathway is metabolic intermediate biosynthesis; chorismate biosynthesis; chorismate from D-erythrose 4-phosphate and phosphoenolpyruvate: step 7/7. In terms of biological role, catalyzes the anti-1,4-elimination of the C-3 phosphate and the C-6 proR hydrogen from 5-enolpyruvylshikimate-3-phosphate (EPSP) to yield chorismate, which is the branch point compound that serves as the starting substrate for the three terminal pathways of aromatic amino acid biosynthesis. This reaction introduces a second double bond into the aromatic ring system. The polypeptide is Chorismate synthase (Aromatoleum aromaticum (strain DSM 19018 / LMG 30748 / EbN1) (Azoarcus sp. (strain EbN1))).